Reading from the N-terminus, the 58-residue chain is Mastoparan-VT7 (58 aa).

The N-terminal stretch at 1–27 is a signal peptide; it reads MKNTILILFTAFIALLGFFGMSAEALA. 4 AXPX repeats span residues 27-30, 31-34, 35-38, and 41-44; these read ADPK, ADPL, AGPN, and ADPE. Positions 28–45 are excised as a propeptide; sequence DPKADPLAGPNPDADPEA.

This sequence belongs to the MCD family. Mastoparan subfamily. In terms of tissue distribution, expressed by the venom gland.

The protein localises to the secreted. Functionally, the synthetic peptide shows antimicrobial activities against Gram-negative bacteria (but not against all strains tested), Gram-positive bacteria (all strains tested) and the fungi C.albicans (but not C.parapsilosis). Exhibits little hemolytic activity against washed human erythrocytes. The protein is Mastoparan-VT7 of Vespa tropica (Greater banded hornet).